Here is a 460-residue protein sequence, read N- to C-terminus: NADH-quinone oxidoreductase subunit N (460 aa).

13 helical membrane-spanning segments follow: residues 2-22, 28-48, 65-85, 104-124, 155-175, 196-216, 230-250, 263-283, 292-312, 321-341, 363-383, 400-420, and 438-458; these read LLPE…AVML, IVAN…LKYS, ANIA…MIIY, ILLS…LLLF, FILG…IYGF, LGLV…LSSA, PIAS…AILL, ISYN…ALGA, LMAY…LLRT, LYML…IMLL, IAAA…LAGF, LLAY…LKII, and YGLL…SFII.

This sequence belongs to the complex I subunit 2 family. NDH-1 is composed of 14 different subunits. Subunits NuoA, H, J, K, L, M, N constitute the membrane sector of the complex.

The protein resides in the cell inner membrane. It catalyses the reaction a quinone + NADH + 5 H(+)(in) = a quinol + NAD(+) + 4 H(+)(out). Functionally, NDH-1 shuttles electrons from NADH, via FMN and iron-sulfur (Fe-S) centers, to quinones in the respiratory chain. The immediate electron acceptor for the enzyme in this species is believed to be ubiquinone. Couples the redox reaction to proton translocation (for every two electrons transferred, four hydrogen ions are translocated across the cytoplasmic membrane), and thus conserves the redox energy in a proton gradient. In Rickettsia bellii (strain RML369-C), this protein is NADH-quinone oxidoreductase subunit N.